Here is a 474-residue protein sequence, read N- to C-terminus: Probable glycine dehydrogenase (decarboxylating) subunit 2 (474 aa).

Lysine 262 is subject to N6-(pyridoxal phosphate)lysine.

Belongs to the GcvP family. C-terminal subunit subfamily. As to quaternary structure, the glycine cleavage system is composed of four proteins: P, T, L and H. In this organism, the P 'protein' is a heterodimer of two subunits. Pyridoxal 5'-phosphate serves as cofactor.

It catalyses the reaction N(6)-[(R)-lipoyl]-L-lysyl-[glycine-cleavage complex H protein] + glycine + H(+) = N(6)-[(R)-S(8)-aminomethyldihydrolipoyl]-L-lysyl-[glycine-cleavage complex H protein] + CO2. Its function is as follows. The glycine cleavage system catalyzes the degradation of glycine. The P protein binds the alpha-amino group of glycine through its pyridoxal phosphate cofactor; CO(2) is released and the remaining methylamine moiety is then transferred to the lipoamide cofactor of the H protein. In Thermotoga maritima (strain ATCC 43589 / DSM 3109 / JCM 10099 / NBRC 100826 / MSB8), this protein is Probable glycine dehydrogenase (decarboxylating) subunit 2.